A 363-amino-acid polypeptide reads, in one-letter code: GDP-fucose transporter (363 aa).

A run of 8 helical transmembrane segments spans residues 30–47, 62–79, 126–148, 152–171, 180–202, 222–244, 251–273, and 307–326; these read VITAVSAYWVFSIGLVFL, FITWYQCLVTVFLCLFLS, VSFYYVGRSLTTVFNVVCTYLIL, TSGQAIGCCALIIFGFLLGV, LSYTGVIFGVLASLSVALNAIYT, LNALVLFLPLMLFNGEFGAVFYF, TFWILMTLGGVFGFMMGYVTGWQ, and LLWWTSNFVVLFGSGMYTYV. The interval 334 to 363 is disordered; the sequence is KNSGASPASEAKSDKVKLLGRDGNAAEESV. Basic and acidic residues predominate over residues 344–353; sequence AKSDKVKLLG.

It belongs to the TPT transporter family. SLC35C subfamily.

It is found in the golgi apparatus membrane. Involved in GDP-fucose import from the cytoplasm into the Golgi lumen. In Caenorhabditis elegans, this protein is GDP-fucose transporter.